The following is a 111-amino-acid chain: MLISVLKSKISYATVTGKDLFYVGSITIDSEIMKQANIIENEKVQVVNLNNGARLETYVIKGEPNSKTIALNGPAARRCEIGDQLFIISYAQVDPTRENIKPKLVDLKTGD.

Catalysis depends on serine 25, which acts as the Schiff-base intermediate with substrate; via pyruvic acid. Pyruvic acid (Ser) is present on serine 25. Position 57 (threonine 57) interacts with substrate. Residue tyrosine 58 is the Proton donor of the active site. 73 to 75 contacts substrate; it reads GPA.

The protein belongs to the PanD family. As to quaternary structure, heterooctamer of four alpha and four beta subunits. Pyruvate serves as cofactor. Is synthesized initially as an inactive proenzyme, which is activated by self-cleavage at a specific serine bond to produce a beta-subunit with a hydroxyl group at its C-terminus and an alpha-subunit with a pyruvoyl group at its N-terminus.

The protein resides in the cytoplasm. It catalyses the reaction L-aspartate + H(+) = beta-alanine + CO2. Its pathway is cofactor biosynthesis; (R)-pantothenate biosynthesis; beta-alanine from L-aspartate: step 1/1. In terms of biological role, catalyzes the pyruvoyl-dependent decarboxylation of aspartate to produce beta-alanine. This is Aspartate 1-decarboxylase from Francisella tularensis subsp. novicida (strain U112).